We begin with the raw amino-acid sequence, 250 residues long: Alpha/beta hydrolase nvfD (250 aa).

Active-site charge relay system residues include D198 and H226.

This sequence belongs to the AB hydrolase superfamily.

It participates in secondary metabolite biosynthesis; terpenoid biosynthesis. Its function is as follows. Alpha/beta hydrolase; part of the gene cluster that mediates the biosynthesis of novofumigatonin, a heavily oxygenated meroterpenoid containing a unique orthoester moiety. The first step of the pathway is the synthesis of 3,5-dimethylorsellinic acid (DMOA) by the polyketide synthase nvfA via condensation of one acetyl-CoA starter unit with 3 malonyl-CoA units and 2 methylations. DMOA is then converted to farnesyl-DMOA by the farnesyltransferase nvfB. Epoxydation by FAD-dependent monooxygenase nvfK, followed by a protonation-initiated cyclization catalyzed by the terpene cyclase nvfL leads to the production of asnavolin H. The short chain dehydrogenase nvfC then as a 3-OH dehydrogenase of asnovolin H to yield chemesin D. There are two branches to synthesize asnovolin A from chemesin D. In one branch, chemesin D undergoes Baeyer-Villiger oxidation by nvfH, methylation by nvfJ, and enoyl reduction by the nvfM D enoylreductase that reduces the double bond between C-5'and C-6', to form respectively asnovolin I, asnovolin K, and asnovolin A. In the other branch, the methylation precedes the Baeyer-Villiger oxidation and the enoyl reduction to yield asnovolin A via the asnovolin J intermediate. Asnovolin A is further converted to fumigatonoid A by the Fe(II)/2-oxoglutarate-dependent dioxygenase nvfI that catalyzes an endoperoxidation reaction. The alpha/beta hydrolase nvfD then acts as an epimerase that converts fumigatonoid A to its C-5' epimer, which then undergoes spontaneous or nvfD-catalyzed lactonization. The following step utilizes the ketoreductase nvfG to produce fumigatonoid B. The dioxygenase nvfE further converts fumigatonoid B into fumigatonoid C. Finally the Fe(II)/2-oxoglutarate-dependent dioxygenase nvfF catalyzes two rounds of oxidation to transform fumigatonoid C into the end product, novofumigatonin A. In Aspergillus novofumigatus (strain IBT 16806), this protein is Alpha/beta hydrolase nvfD.